The chain runs to 201 residues: Histone chaperone asf1a-A (201 aa).

The protein belongs to the ASF1 family. As to quaternary structure, interacts with histone H3 (including both histone H3.1 and H3.3) and histone H4. Interacts with hira and p60.

The protein localises to the nucleus. Its function is as follows. Histone chaperone that facilitates histone deposition and histone exchange and removal during nucleosome assembly and disassembly. Not critical for histone deposition during nucleosome assembly. The sequence is that of Histone chaperone asf1a-A (asf1aa) from Xenopus laevis (African clawed frog).